Reading from the N-terminus, the 138-residue chain is ATP synthase epsilon chain (138 aa).

This sequence belongs to the ATPase epsilon chain family. As to quaternary structure, F-type ATPases have 2 components, CF(1) - the catalytic core - and CF(0) - the membrane proton channel. CF(1) has five subunits: alpha(3), beta(3), gamma(1), delta(1), epsilon(1). CF(0) has three main subunits: a, b and c.

The protein localises to the cell inner membrane. Its function is as follows. Produces ATP from ADP in the presence of a proton gradient across the membrane. The protein is ATP synthase epsilon chain of Psychrobacter arcticus (strain DSM 17307 / VKM B-2377 / 273-4).